A 143-amino-acid chain; its full sequence is Large ribosomal subunit protein uL11 (143 aa).

Belongs to the universal ribosomal protein uL11 family. As to quaternary structure, part of the ribosomal stalk of the 50S ribosomal subunit. Interacts with L10 and the large rRNA to form the base of the stalk. L10 forms an elongated spine to which L12 dimers bind in a sequential fashion forming a multimeric L10(L12)X complex. One or more lysine residues are methylated.

Functionally, forms part of the ribosomal stalk which helps the ribosome interact with GTP-bound translation factors. The protein is Large ribosomal subunit protein uL11 of Rhizobium rhizogenes (strain K84 / ATCC BAA-868) (Agrobacterium radiobacter).